The following is a 318-amino-acid chain: Taste receptor type 2 member 60 (318 aa).

At 1-7 the chain is on the extracellular side; that stretch reads MNGDHMV. A helical transmembrane segment spans residues 8 to 28; sequence LGSSVTDKKAIILVTILLLLR. Residues 29 to 40 are Cytoplasmic-facing; that stretch reads LVAIAGNGFITA. The chain crosses the membrane as a helical span at residues 41 to 61; it reads ALGVEWVLRRMLLPCDKLLVS. At 62–88 the chain is on the extracellular side; the sequence is LGASHFCLQSVVMGKTIYVFLYPMAFP. A helical membrane pass occupies residues 89 to 109; that stretch reads YNPVLQFLAFQWDFLNAATLW. At 110–128 the chain is on the cytoplasmic side; that stretch reads FSTWLSVFYCVKIATFTHP. A helical transmembrane segment spans residues 129 to 149; sequence VFFWLKHKLSGWLPWMIFSYV. Topologically, residues 150 to 183 are extracellular; it reads GLSSFTTILFFIGNHRMYQNYLKNHLQPWNVTGN. N-linked (GlcNAc...) asparagine glycosylation occurs at N179. The chain crosses the membrane as a helical span at residues 184 to 204; sequence SIRSYCEKFYLFPLKMITWTM. Topologically, residues 205-234 are cytoplasmic; sequence PTAVFFICMILLITSLGRHMKKALLTTSGF. Residues 235–255 traverse the membrane as a helical segment; that stretch reads REPSVQAHIKALLALLSFAML. The Extracellular portion of the chain corresponds to 256–264; sequence FISYFLSLV. A helical membrane pass occupies residues 265-285; it reads FSAAGIFPPLDFKFWVWESVI. Topologically, residues 286–318 are cytoplasmic; that stretch reads YLCAAVHPIILLFSNCRLRAVLKSRRSSRCGTP.

The protein belongs to the G-protein coupled receptor T2R family.

Its subcellular location is the membrane. In terms of biological role, receptor that may play a role in the perception of bitterness and is gustducin-linked. May play a role in sensing the chemical composition of the gastrointestinal content. The activity of this receptor may stimulate alpha gustducin, mediate PLC-beta-2 activation and lead to the gating of TRPM5. The protein is Taste receptor type 2 member 60 (TAS2R60) of Pan paniscus (Pygmy chimpanzee).